The following is a 668-amino-acid chain: Protein brown (668 aa).

Topologically, residues 1 to 412 (MPMDEGDAQG…TEDLANIRSG (412 aa)) are cytoplasmic. The 298-residue stretch at 31 to 328 (YSFWNECRKQ…FTEGFMQPKN (298 aa)) folds into the ABC transporter domain. 63–70 (GGSGAGKT) serves as a coordination point for ATP. Residues 413 to 433 (LIGFGFFMTTAVTLSLMYSGV) traverse the membrane as a helical segment. Over 434–453 (GGLTQRTVQDVGGSIFMLSN) the chain is Extracellular. The helical transmembrane segment at 454–474 (EMIFTFSYGVTYIFPAALPII) threads the bilayer. At 475-490 (RREVAEGTYSLSAYYV) the chain is on the cytoplasmic side. The helical transmembrane segment at 491–511 (ALVLSFVPVAFFKGYMFLSVI) threads the bilayer. Residues 512–524 (YASIYYTRGFLLY) are Extracellular-facing. The helical transmembrane segment at 525 to 545 (ITMGFLMSLSAIAAVGYGVFL) threads the bilayer. The Cytoplasmic portion of the chain corresponds to 546-561 (SSLFETDKMASECAAP). Residues 562-582 (FDLIFLIFGGTYMNVDSVPLL) form a helical membrane-spanning segment. The Extracellular segment spans residues 583 to 637 (KYFSLFFYSNEALMYNFWIDIDNIACXVNDEHPCCQTGLEVLQQASFRTADYTFW). A helical transmembrane segment spans residues 638 to 658 (LDCASLLVVALVFHIVSFTLI). At 659-668 (RRYINRSGYY) the chain is on the cytoplasmic side.

This sequence belongs to the ABC transporter superfamily. ABCG family. Eye pigment precursor importer (TC 3.A.1.204) subfamily. As to quaternary structure, may form a heterodimer with w/white. Expressed in eyes.

It is found in the membrane. It catalyses the reaction guanine(out) + ATP + H2O = guanine(in) + ADP + phosphate + H(+). The enzyme catalyses riboflavin(in) + ATP + H2O = riboflavin(out) + ADP + phosphate + H(+). It carries out the reaction (6S)-5,6,7,8-tetrahydrofolate(out) + ATP + H2O = (6S)-5,6,7,8-tetrahydrofolate(in) + ADP + phosphate + H(+). Functionally, ATP-dependent transporter of the ATP-binding cassette (ABC) family which transports various molecules including bioamines, neurotransmitters and metabolic intermediates. In the eye and probably in association with w/white, required for the transport of the eye red pigment precursor, guanine, into pigment cell granules. In Malpighian tubules, involved in guanine uptake. Probably in association with w/white, involved in aging-induced intestinal stem cell proliferation in the midgut by regulating tetrahydrofolate transport. The sequence is that of Protein brown from Drosophila virilis (Fruit fly).